The primary structure comprises 270 residues: uncharacterized protein (270 aa).

The N-terminal stretch at 1–22 is a signal peptide; it reads MEYIKKIALYMSVLLLIIFIGG. Residue C23 is the site of N-palmitoyl cysteine attachment. C23 carries S-diacylglycerol cysteine lipidation.

It belongs to the staphylococcal tandem lipoprotein family.

It localises to the cell membrane. This is an uncharacterized protein from Staphylococcus aureus (strain USA300).